The following is a 116-amino-acid chain: Putative iron-sulfur cluster insertion protein ErpA (116 aa).

Positions 44, 108, and 110 each coordinate iron-sulfur cluster.

It belongs to the HesB/IscA family. As to quaternary structure, homodimer. Iron-sulfur cluster is required as a cofactor.

In terms of biological role, required for insertion of 4Fe-4S clusters. The chain is Putative iron-sulfur cluster insertion protein ErpA from Aromatoleum aromaticum (strain DSM 19018 / LMG 30748 / EbN1) (Azoarcus sp. (strain EbN1)).